A 291-amino-acid chain; its full sequence is MRIPFTKMQGAGNDFVVLDETQGRFGLSTAHYRLLADRHFGVGADQILTVRPSPAPGIDFEYLIHNADGAEVEQCGNGARCFARFVRDQGLTAKDAIRVQTRGGVIEPQLNPDGRVTVNMGAPVFELAEIPFDATGLQPQTSGLWKKWPLALVDSGHATTVYVAVVSMGNPHAVQVVDDVDTAPVRLQGPLIEHHASFPKRVNAGFMQIVDRSHIRLRVYERGTGETLACGSGACAAVVAGIRLGLLDDTVHVQTHGGTLTISWAGAAAPVLMTGPATPVFHGEINLPDNL.

3 residues coordinate substrate: Asn-13, Gln-46, and Asn-66. Cys-75 acts as the Proton donor in catalysis. Residues 76 to 77 (GN), Asn-170, Asn-203, and 221 to 222 (ER) each bind substrate. Cys-230 serves as the catalytic Proton acceptor. Residue 231-232 (GS) coordinates substrate.

The protein belongs to the diaminopimelate epimerase family. Homodimer.

Its subcellular location is the cytoplasm. The catalysed reaction is (2S,6S)-2,6-diaminopimelate = meso-2,6-diaminopimelate. The protein operates within amino-acid biosynthesis; L-lysine biosynthesis via DAP pathway; DL-2,6-diaminopimelate from LL-2,6-diaminopimelate: step 1/1. In terms of biological role, catalyzes the stereoinversion of LL-2,6-diaminopimelate (L,L-DAP) to meso-diaminopimelate (meso-DAP), a precursor of L-lysine and an essential component of the bacterial peptidoglycan. The polypeptide is Diaminopimelate epimerase (Albidiferax ferrireducens (strain ATCC BAA-621 / DSM 15236 / T118) (Rhodoferax ferrireducens)).